The sequence spans 661 residues: Pseudouridylate synthase 7 homolog (661 aa).

Residue Met1 is modified to N-acetylmethionine. The segment at 1-97 is disordered; it reads MEMTEMTGVS…GLSEECEEEE (97 aa). The residue at position 10 (Ser10) is a Phosphoserine. Polar residues predominate over residues 36-52; that stretch reads SECSLTKGQDGLQNDFL. Residues 77-97 are compositionally biased toward acidic residues; that stretch reads QLEDEEEEEEDGLSEECEEEE. At Ser127 the chain carries Phosphoserine. Residue Asp294 is the Nucleophile of the active site. The 211-residue stretch at 370-580 folds into the TRUD domain; that stretch reads GFINYYGMQR…SGAYRKIIIR (211 aa). Thr610 carries the phosphothreonine modification.

Belongs to the pseudouridine synthase TruD family. As to quaternary structure, interacts with SIRT1.

Its subcellular location is the nucleus. The enzyme catalyses a uridine in tRNA = a pseudouridine in tRNA. It carries out the reaction uridine(13) in tRNA = pseudouridine(13) in tRNA. The catalysed reaction is a uridine in mRNA = a pseudouridine in mRNA. Functionally, pseudouridylate synthase that catalyzes pseudouridylation of RNAs. Acts as a regulator of protein synthesis in embryonic stem cells by mediating pseudouridylation of RNA fragments derived from tRNAs (tRFs): pseudouridylated tRFs inhibit translation by targeting the translation initiation complex. Also catalyzes pseudouridylation of mRNAs: mediates pseudouridylation of mRNAs with the consensus sequence 5'-UGUAG-3'. Acts as a regulator of pre-mRNA splicing by mediating pseudouridylation of pre-mRNAs at locations associated with alternatively spliced regions. Pseudouridylation of pre-mRNAs near splice sites directly regulates mRNA splicing and mRNA 3'-end processing. In addition to mRNAs and tRNAs, binds other types of RNAs, such as snRNAs, Y RNAs and vault RNAs, suggesting that it can catalyze pseudouridylation of many RNA types. The polypeptide is Pseudouridylate synthase 7 homolog (Homo sapiens (Human)).